The chain runs to 405 residues: Serine/threonine transporter SstT (405 aa).

8 helical membrane-spanning segments follow: residues 13–33 (GGSLVLQIFVGIIAGVALAGF), 43–63 (FLGDLFVGALKAIAPVLVFVL), 82–102 (IILLYLVGTFAAALTAVLMSF), 141–161 (ALINANYIGLLAWGVGLGIAL), 185–205 (FVICLAPIGIFGLVAATIAQT), 217–237 (LGVLLGAMAVIAFVVNPLIVF), 298–318 (MAGAAITITVLTLAAVHTLGI), and 339–359 (ASGVAGGSLLLIPLACSLFGI).

The protein belongs to the dicarboxylate/amino acid:cation symporter (DAACS) (TC 2.A.23) family.

It is found in the cell inner membrane. It catalyses the reaction L-serine(in) + Na(+)(in) = L-serine(out) + Na(+)(out). The catalysed reaction is L-threonine(in) + Na(+)(in) = L-threonine(out) + Na(+)(out). Functionally, involved in the import of serine and threonine into the cell, with the concomitant import of sodium (symport system). This Shewanella amazonensis (strain ATCC BAA-1098 / SB2B) protein is Serine/threonine transporter SstT.